A 601-amino-acid polypeptide reads, in one-letter code: Elongation factor 4 (601 aa).

The region spanning 5 to 187 (SNIRNFAIIA…AIVTKLPSPN (183 aa)) is the tr-type G domain. GTP contacts are provided by residues 17–22 (DHGKST) and 134–137 (NKID).

The protein belongs to the TRAFAC class translation factor GTPase superfamily. Classic translation factor GTPase family. LepA subfamily.

Its subcellular location is the cell inner membrane. The catalysed reaction is GTP + H2O = GDP + phosphate + H(+). Functionally, required for accurate and efficient protein synthesis under certain stress conditions. May act as a fidelity factor of the translation reaction, by catalyzing a one-codon backward translocation of tRNAs on improperly translocated ribosomes. Back-translocation proceeds from a post-translocation (POST) complex to a pre-translocation (PRE) complex, thus giving elongation factor G a second chance to translocate the tRNAs correctly. Binds to ribosomes in a GTP-dependent manner. The sequence is that of Elongation factor 4 from Orientia tsutsugamushi (strain Ikeda) (Rickettsia tsutsugamushi).